The chain runs to 337 residues: ATP-dependent 6-phosphofructokinase (337 aa).

ATP is bound at residue glycine 11. Residue arginine 21–arginine 25 participates in ADP binding. ATP contacts are provided by residues arginine 72–tyrosine 73 and glycine 102–serine 105. Mg(2+) is bound at residue aspartate 103. Threonine 125–aspartate 127 contacts substrate. Aspartate 127 (proton acceptor) is an active-site residue. Residue arginine 154 coordinates ADP. Substrate-binding positions include arginine 162 and methionine 169–arginine 171. ADP contacts are provided by residues glycine 185 to aspartate 187, lysine 212, and lysine 214 to histidine 216. Substrate contacts are provided by residues glutamate 223, arginine 245, and histidine 251–arginine 254.

The protein belongs to the phosphofructokinase type A (PFKA) family. ATP-dependent PFK group I subfamily. Prokaryotic clade 'B1' sub-subfamily. Homotetramer. Requires Mg(2+) as cofactor.

It localises to the cytoplasm. It carries out the reaction beta-D-fructose 6-phosphate + ATP = beta-D-fructose 1,6-bisphosphate + ADP + H(+). It participates in carbohydrate degradation; glycolysis; D-glyceraldehyde 3-phosphate and glycerone phosphate from D-glucose: step 3/4. Its activity is regulated as follows. Allosterically activated by ADP and other diphosphonucleosides, and allosterically inhibited by phosphoenolpyruvate. Its function is as follows. Catalyzes the phosphorylation of D-fructose 6-phosphate to fructose 1,6-bisphosphate by ATP, the first committing step of glycolysis. The sequence is that of ATP-dependent 6-phosphofructokinase from Streptococcus pyogenes serotype M3 (strain SSI-1).